The chain runs to 183 residues: Large ribosomal subunit protein eL18 (183 aa).

Positions 146-183 are disordered; the sequence is HFGPAPGVPHSHTKPYVRSKGRKFEKARGRRKSRGFRV. Basic residues-rich tracts occupy residues 156 to 166 and 173 to 183; these read SHTKPYVRSKG and RGRRKSRGFRV.

Belongs to the eukaryotic ribosomal protein eL18 family.

The chain is Large ribosomal subunit protein eL18 (RPL18) from Cicer arietinum (Chickpea).